Reading from the N-terminus, the 117-residue chain is Large ribosomal subunit protein bL19 (117 aa).

This sequence belongs to the bacterial ribosomal protein bL19 family.

This protein is located at the 30S-50S ribosomal subunit interface and may play a role in the structure and function of the aminoacyl-tRNA binding site. The polypeptide is Large ribosomal subunit protein bL19 (Vibrio campbellii (strain ATCC BAA-1116)).